A 54-amino-acid chain; its full sequence is Large ribosomal subunit protein bL33B (54 aa).

Belongs to the bacterial ribosomal protein bL33 family.

The protein is Large ribosomal subunit protein bL33B of Saccharopolyspora erythraea (strain ATCC 11635 / DSM 40517 / JCM 4748 / NBRC 13426 / NCIMB 8594 / NRRL 2338).